The chain runs to 145 residues: D-aminoacyl-tRNA deacylase (145 aa).

A Gly-cisPro motif, important for rejection of L-amino acids motif is present at residues Gly137–Pro138.

It belongs to the DTD family. Homodimer.

Its subcellular location is the cytoplasm. It catalyses the reaction glycyl-tRNA(Ala) + H2O = tRNA(Ala) + glycine + H(+). The enzyme catalyses a D-aminoacyl-tRNA + H2O = a tRNA + a D-alpha-amino acid + H(+). Its function is as follows. An aminoacyl-tRNA editing enzyme that deacylates mischarged D-aminoacyl-tRNAs. Also deacylates mischarged glycyl-tRNA(Ala), protecting cells against glycine mischarging by AlaRS. Acts via tRNA-based rather than protein-based catalysis; rejects L-amino acids rather than detecting D-amino acids in the active site. By recycling D-aminoacyl-tRNA to D-amino acids and free tRNA molecules, this enzyme counteracts the toxicity associated with the formation of D-aminoacyl-tRNA entities in vivo and helps enforce protein L-homochirality. The protein is D-aminoacyl-tRNA deacylase of Enterobacter sp. (strain 638).